A 40-amino-acid chain; its full sequence is MSDTTGRIPLCLIGTVAGIAVIGLVGVFFYGSYSGLGSSL.

Residues 8–28 (IPLCLIGTVAGIAVIGLVGVF) traverse the membrane as a helical segment.

It belongs to the PsbJ family. In terms of assembly, PSII is composed of 1 copy each of membrane proteins PsbA, PsbB, PsbC, PsbD, PsbE, PsbF, PsbH, PsbI, PsbJ, PsbK, PsbL, PsbM, PsbT, PsbX, PsbY, PsbZ, Psb30/Ycf12, at least 3 peripheral proteins of the oxygen-evolving complex and a large number of cofactors. It forms dimeric complexes.

Its subcellular location is the plastid. It localises to the chloroplast thylakoid membrane. Its function is as follows. One of the components of the core complex of photosystem II (PSII). PSII is a light-driven water:plastoquinone oxidoreductase that uses light energy to abstract electrons from H(2)O, generating O(2) and a proton gradient subsequently used for ATP formation. It consists of a core antenna complex that captures photons, and an electron transfer chain that converts photonic excitation into a charge separation. This is Photosystem II reaction center protein J from Triticum aestivum (Wheat).